Here is an 860-residue protein sequence, read N- to C-terminus: Pentatricopeptide repeat-containing protein At2g40720 (860 aa).

PPR repeat units follow at residues 59–93 (SVFT…GWRY), 94–124 (DPFI…WSQS), 132–166 (DVTV…GVRP), 167–203 (DAFS…SLDT), 204–234 (DSFL…IEDK), 236–270 (NVVL…SVKL), 271–305 (VSTS…GLHN), 306–340 (DPYV…RLEI), 341–371 (WNAM…SVLP), 372–406 (DSFT…PIQS), 407–437 (TSTI…MEEK), 438–472 (DMVA…DDSL), 475–509 (DSDI…GLVL), 510–540 (NVFV…MSTE), 541–575 (NMVA…GIFP), 576–610 (DSVS…GIPS), 611–641 (DTHL…MQHK), 642–676 (SLIT…GESP), 677–707 (DDVT…MKQD), and 713–743 (NMEH…MPIE). The interval 748–823 (IWLCLLSASR…QPGCSWIEVS (76 aa)) is type E motif. The type E(+) motif stretch occupies residues 824-854 (DRTNVFFSGGSSSPMKAEIFNVLNRLKSNMV).

Belongs to the PPR family. PCMP-E subfamily.

This chain is Pentatricopeptide repeat-containing protein At2g40720 (PCMP-E26), found in Arabidopsis thaliana (Mouse-ear cress).